A 1607-amino-acid chain; its full sequence is Laminin subunit gamma-1 (1607 aa).

An N-terminal signal peptide occupies residues 1–33 (MTGGGRAALALQPRGRLWPLLAVLAAVAGCVRA). One can recognise a Laminin N-terminal domain in the interval 44 to 283 (RPQRCMPEFV…AISDFAVGGR (240 aa)). N-linked (GlcNAc...) asparagine glycans are attached at residues asparagine 58 and asparagine 132. Intrachain disulfides connect cysteine 284-cysteine 293, cysteine 286-cysteine 303, cysteine 305-cysteine 314, cysteine 340-cysteine 349, cysteine 342-cysteine 365, cysteine 368-cysteine 377, cysteine 380-cysteine 393, cysteine 396-cysteine 408, cysteine 398-cysteine 414, cysteine 416-cysteine 425, cysteine 428-cysteine 440, cysteine 443-cysteine 454, cysteine 445-cysteine 461, cysteine 463-cysteine 472, and cysteine 475-cysteine 490. Laminin EGF-like domains follow at residues 284 to 339 (CKCN…ESLP), 340 to 395 (CDCN…ACSP), 396 to 442 (CHCS…GCRP), and 443 to 492 (CSCD…GCTP). The 10-residue stretch at 493 to 502 (CFCFGHSSVC) folds into the Laminin EGF-like 5; first part domain. The Laminin IV type A domain occupies 512-687 (DISSTFQIDE…PGVPATWVES (176 aa)). N-linked (GlcNAc...) asparagine glycosylation is found at asparagine 574 and asparagine 648. A Laminin EGF-like 5; second part domain is found at 688-721 (CTCPVGYGGQFCETCLPGYRRETPSLGPYSPCVL). Cystine bridges form between cysteine 722-cysteine 731, cysteine 724-cysteine 738, cysteine 740-cysteine 749, cysteine 752-cysteine 768, cysteine 771-cysteine 779, cysteine 773-cysteine 790, cysteine 793-cysteine 802, cysteine 805-cysteine 823, cysteine 826-cysteine 840, cysteine 828-cysteine 847, cysteine 850-cysteine 859, cysteine 862-cysteine 879, cysteine 882-cysteine 896, cysteine 884-cysteine 903, cysteine 905-cysteine 914, cysteine 917-cysteine 930, cysteine 933-cysteine 945, cysteine 935-cysteine 952, cysteine 954-cysteine 963, cysteine 966-cysteine 978, cysteine 981-cysteine 993, cysteine 983-cysteine 999, cysteine 1001-cysteine 1010, and cysteine 1013-cysteine 1026. 2 consecutive Laminin EGF-like domains span residues 722–770 (CTCN…DCQP) and 771–825 (CPCP…LCRP). The 56-residue stretch at 826–881 (CQCNDNIDPNAVGNCNRLTGECLKCIYNTAGFYCDRCKEGFFGNPLAPNPADKCKA) folds into the Laminin EGF-like 8; nidogen-binding domain. Laminin EGF-like domains follow at residues 882–932 (CACN…GCER), 933–980 (CDCH…GCKP), and 981–1028 (CDCH…GCQE). N-linked (GlcNAc...) asparagine glycosylation is found at asparagine 1020 and asparagine 1105. Positions 1029–1607 (CPACYRLVKD…CFNTPSIEKP (579 aa)) are domain II and I. Residues 1034–1594 (RLVKDKAAEH…HNLEDIKKTL (561 aa)) are a coiled coil. Serine 1147 bears the Phosphoserine mark. N-linked (GlcNAc...) asparagine glycans are attached at residues asparagine 1159, asparagine 1173, asparagine 1203, asparagine 1221, asparagine 1239, asparagine 1378, asparagine 1393, and asparagine 1437. Serine 1491 carries the phosphoserine modification.

In terms of assembly, laminin is a complex glycoprotein, consisting of three different polypeptide chains (alpha, beta, gamma), which are bound to each other by disulfide bonds into a cross-shaped molecule comprising one long and three short arms with globules at each end. Gamma-1 is a subunit of laminin-1 (laminin-111 or EHS laminin), laminin-2 (laminin-211 or merosin), laminin-3 (laminin-121 or S-laminin), laminin-4 (laminin-221 or S-merosin), laminin-6 (laminin-311 or K-laminin), laminin-7 (laminin-321 or KS-laminin), laminin-8 (laminin-411), laminin-9 (laminin-421), laminin-10 (laminin-511) and laminin-11 (laminin-521). Interacts with SVEP1. Found in the basement membranes (major component).

The protein localises to the secreted. It localises to the extracellular space. Its subcellular location is the extracellular matrix. It is found in the basement membrane. In terms of biological role, binding to cells via a high affinity receptor, laminin is thought to mediate the attachment, migration and organization of cells into tissues during embryonic development by interacting with other extracellular matrix components. This chain is Laminin subunit gamma-1 (Lamc1), found in Mus musculus (Mouse).